Here is a 294-residue protein sequence, read N- to C-terminus: Thymidylate synthase (294 aa).

Residues Arg31 and 156 to 157 (RR) contribute to the dUMP site. Cys176 functions as the Nucleophile in the catalytic mechanism. DUMP contacts are provided by residues 196 to 199 (RSAD), Asn207, and 237 to 239 (HIY). Asp199 is a (6R)-5,10-methylene-5,6,7,8-tetrahydrofolate binding site. Residue Ala293 participates in (6R)-5,10-methylene-5,6,7,8-tetrahydrofolate binding.

Belongs to the thymidylate synthase family. In terms of assembly, homodimer.

It carries out the reaction dUMP + (6R)-5,10-methylene-5,6,7,8-tetrahydrofolate = 7,8-dihydrofolate + dTMP. The protein operates within pyrimidine metabolism; dTTP biosynthesis. The chain is Thymidylate synthase (70) from Saimiri sciureus (Common squirrel monkey).